The primary structure comprises 87 residues: Large ribosomal subunit protein bL27 (87 aa).

Residues 1–22 form a disordered region; the sequence is MAHKKAGGSSRNGRDSQGQRRG.

It belongs to the bacterial ribosomal protein bL27 family.

This Nitratidesulfovibrio vulgaris (strain DP4) (Desulfovibrio vulgaris) protein is Large ribosomal subunit protein bL27.